The sequence spans 686 residues: MKNNIINTQQSFVTMPNVIVPDIEKEIRRMENGACSSFSEDDDSASTSEESENENPHARGSFSYKSLRKGGPSQREQYLPGAIALFNVNNSSNKDQEPEEKKKKKKEKKSKSDDKNENKNDPEKKKKKKDKEKKKKEEKSKDKKEEEKKEVVVIDPSGNTYYNWLFCITLPVMYNWTMVIARACFDELQSDYLEYWLILDYVSDIVYLIDMFVRTRTGYLEQGLLVKEELKLINKYKSNLQFKLDVLSLIPTDLLYFKLGWNYPEIRLNRLLRFSRMFEFFQRTETRTNYPNIFRISNLVMYIVIIIHWNACVFYSISKAIGFGNDTWVYPDINDPEFGRLARKYVYSLYWSTLTLTTIGETPPPVRDSEYVFVVVDFLIGVLIFATIVGNIGSMISNMNAARAEFQARIDAIKQYMHFRNVSKDMEKRVIKWFDYLWTNKKTVDEKEVLKYLPDKLRAEIAINVHLDTLKKVRIFADCEAGLLVELVLKLQPQVYSPGDYICKKGDIGREMYIIKEGKLAVVADDGVTQFVVLSDGSYFGEISILNIKGSKAGNRRTANIKSIGYSDLFCLSKDDLMEALTEYPDAKTMLEEKGKQILMKDGLLDLNIANAGSDPKDLEEKVTRMEGSVDLLQTRFARILAEYESMQQKLKQRLTKVEKFLKPLIDTEFSSIEGPGAESGPIDST.

Topologically, residues 1 to 165 (MKNNIINTQQ…PSGNTYYNWL (165 aa)) are cytoplasmic. Disordered regions lie at residues 31–75 (ENGA…PSQR) and 87–149 (NVNN…EEKK). Residues 39–53 (SEDDDSASTSEESEN) show a composition bias toward acidic residues. Basic and acidic residues predominate over residues 110 to 124 (SKSDDKNENKNDPEK). The segment covering 125–134 (KKKKKDKEKK) has biased composition (basic residues). Basic and acidic residues predominate over residues 135-149 (KKEEKSKDKKEEEKK). The helical transmembrane segment at 166–187 (FCITLPVMYNWTMVIARACFDE) threads the bilayer. Residues 188-197 (LQSDYLEYWL) are Extracellular-facing. The helical transmembrane segment at 198–218 (ILDYVSDIVYLIDMFVRTRTG) threads the bilayer. The Cytoplasmic segment spans residues 219–243 (YLEQGLLVKEELKLINKYKSNLQFK). Residues 244 to 262 (LDVLSLIPTDLLYFKLGWN) form a helical membrane-spanning segment. Over 263-267 (YPEIR) the chain is Extracellular. A helical membrane pass occupies residues 268-286 (LNRLLRFSRMFEFFQRTET). Over 287 to 293 (RTNYPNI) the chain is Cytoplasmic. Residues 291 to 399 (PNIFRISNLV…GNIGSMISNM (109 aa)) form an ion conduction pathway region. Residues 294–317 (FRISNLVMYIVIIIHWNACVFYSI) form a helical membrane-spanning segment. The Extracellular portion of the chain corresponds to 318 to 340 (SKAIGFGNDTWVYPDINDPEFGR). A glycan (N-linked (GlcNAc...) asparagine) is linked at N325. A run of 2 helical transmembrane segments spans residues 341–375 (LARK…VFVV) and 376–400 (VDFL…SNMN). The selectivity filter stretch occupies residues 358 to 361 (TIGE). Positions 401–477 (AARAEFQARI…DTLKKVRIFA (77 aa)) are C-linker. Over 401–686 (AARAEFQARI…GAESGPIDST (286 aa)) the chain is Cytoplasmic. A cyclic nucleotide-binding domain region spans residues 481–601 (AGLLVELVLK…EEKGKQILMK (121 aa)). Residues G541, S544, R557, and T558 each contribute to the 3',5'-cyclic GMP site. Residues R557 and T558 each coordinate 3',5'-cyclic AMP. The stretch at 619–673 (LEEKVTRMEGSVDLLQTRFARILAEYESMQQKLKQRLTKVEKFLKPLIDTEFSSI) forms a coiled coil.

Belongs to the cyclic nucleotide-gated cation channel (TC 1.A.1.5) family. CNGA1 subfamily. In terms of assembly, forms heterotetrameric channels composed of CNGA1 and CNGB1 subunits with 3:1 stoichiometry. May also form cyclic nucleotide-activated homotetrameric channels, that are efficiently activated by saturating cGMP, but poorly activated by saturating cAMP compared to the heterotetramer with CNGB1. The channel binds Ca(2+)-bound CALM1 via CaM1 and CaM2 regions of the CNGB1 subunit; this interaction modulates the affinity of the channel for cNMPs in response to intracellular Ca(2+) levels. Rod cells in the retina.

It localises to the cell membrane. It carries out the reaction Ca(2+)(in) = Ca(2+)(out). The enzyme catalyses Na(+)(in) = Na(+)(out). It catalyses the reaction K(+)(in) = K(+)(out). The catalysed reaction is NH4(+)(in) = NH4(+)(out). It carries out the reaction Rb(+)(in) = Rb(+)(out). The enzyme catalyses Li(+)(in) = Li(+)(out). It catalyses the reaction Cs(+)(in) = Cs(+)(out). With respect to regulation, channel opening is activated by cGMP and at a much lesser extent by cAMP. Ca(2+) binding concominantly blocks monovalent cation currents. Inhibited by L-cis-diltiazem. Functionally, pore-forming subunit of the rod cyclic nucleotide-gated channel. Mediates rod photoresponses at dim light converting transient changes in intracellular cGMP levels into electrical signals. In the dark, cGMP levels are high and keep the channel open enabling a steady inward current carried by Na(+) and Ca(2+) ions that leads to membrane depolarization and neurotransmitter release from synaptic terminals. Upon photon absorption cGMP levels decline leading to channel closure and membrane hyperpolarization that ultimately slows neurotransmitter release and signals the presence of light, the end point of the phototransduction cascade. Conducts cGMP- and cAMP-gated ion currents, with permeability for monovalent and divalent cations. The selectivity for Ca(2+) over Na(+) increases with cGMP concentrations, whereas the selectivity among monovalent ions is independent of the cGMP levels. The protein is Cyclic nucleotide-gated channel alpha-1 of Homo sapiens (Human).